Consider the following 50-residue polypeptide: Metallothionein zym1 (50 aa).

Cysteine 7, cysteine 15, cysteine 17, cysteine 21, cysteine 23, cysteine 26, cysteine 30, cysteine 32, cysteine 40, cysteine 42, cysteine 45, and cysteine 47 together coordinate Zn(2+).

This sequence belongs to the metallothionein superfamily.

It localises to the cytoplasm. Its subcellular location is the nucleus. Functionally, metallothionein involved in tolerance to zinc and cadmium. Binds four zinc ions. The sequence is that of Metallothionein zym1 (zym1) from Schizosaccharomyces pombe (strain 972 / ATCC 24843) (Fission yeast).